A 549-amino-acid polypeptide reads, in one-letter code: Glucose-6-phosphate isomerase (549 aa).

3 positions are modified to N6-acetyllysine: K80, K228, and K234. The Proton donor role is filled by E355. Residues H386 and K514 contribute to the active site.

It belongs to the GPI family.

The protein localises to the cytoplasm. It carries out the reaction alpha-D-glucose 6-phosphate = beta-D-fructose 6-phosphate. Its pathway is carbohydrate biosynthesis; gluconeogenesis. It participates in carbohydrate degradation; glycolysis; D-glyceraldehyde 3-phosphate and glycerone phosphate from D-glucose: step 2/4. Functionally, catalyzes the reversible isomerization of glucose-6-phosphate to fructose-6-phosphate. The polypeptide is Glucose-6-phosphate isomerase (Escherichia coli O127:H6 (strain E2348/69 / EPEC)).